Here is a 344-residue protein sequence, read N- to C-terminus: Polyhomeotic-like protein 2 (344 aa).

Polar residues predominate over residues 1–23; it reads MTSGNGSSPVPTAATGNRTQNGE. The disordered stretch occupies residues 1–28; that stretch reads MTSGNGSSPVPTAATGNRTQNGENKPPQ. The HD1 motif lies at 25 to 53; the sequence is KPPQAVVKPQILTHFIEGFVIQEGAQPFP. The segment at 114–148 adopts an FCS-type zinc-finger fold; it reads GDGDPPKLKCELCGRVDFEYKFKRSKRFCSMACAK. Residues Cys123, Cys126, Cys142, and Cys146 each contribute to the Zn(2+) site. The tract at residues 165-269 is disordered; the sequence is RSKLQKPTVA…LHSRDPIAMS (105 aa). The span at 173 to 183 shows a compositional bias: basic residues; sequence VAKHARRRSRK. The segment covering 216 to 233 has biased composition (polar residues); sequence KLSNSQEDSSRCSDNSSY. Residues 234-248 show a composition bias toward low complexity; it reads EEPLSPMSASSSLSR. In terms of domain architecture, SAM spans 280-344; the sequence is WNVEDVYDFV…YARISMLKDS (65 aa).

In terms of assembly, component of a PRC1-like complex.

It localises to the nucleus. Functionally, component of a Polycomb group (PcG) multiprotein PRC1-like complex, a complex class required to maintain the transcriptionally repressive state of many genes, including Hox genes, throughout development. PcG PRC1 complex acts via chromatin remodeling and modification of histones; it mediates monoubiquitination of histone H2A 'Lys-119', rendering chromatin heritably changed in its expressibility. The polypeptide is Polyhomeotic-like protein 2 (phc2) (Xenopus laevis (African clawed frog)).